Consider the following 345-residue polypeptide: UPF0324 membrane protein CTC_01844 (345 aa).

10 consecutive transmembrane segments (helical) span residues 7 to 24, 28 to 50, 70 to 87, 91 to 113, 120 to 142, 152 to 174, 181 to 203, 209 to 231, 261 to 283, and 316 to 338; these read YSVG…SGFI, IPYR…NPIV, LAII…VLEV, SLIV…GKLF, SGLI…SPVI, AISA…GKYF, YGLW…YAFS, FSVI…FSYI, IFPW…IIPN, and SGFA…SFLV.

The protein belongs to the UPF0324 family.

The protein localises to the cell membrane. This is UPF0324 membrane protein CTC_01844 from Clostridium tetani (strain Massachusetts / E88).